A 299-amino-acid chain; its full sequence is Phosphoribosylaminoimidazole-succinocarboxamide synthase (299 aa).

Belongs to the SAICAR synthetase family.

It carries out the reaction 5-amino-1-(5-phospho-D-ribosyl)imidazole-4-carboxylate + L-aspartate + ATP = (2S)-2-[5-amino-1-(5-phospho-beta-D-ribosyl)imidazole-4-carboxamido]succinate + ADP + phosphate + 2 H(+). It participates in purine metabolism; IMP biosynthesis via de novo pathway; 5-amino-1-(5-phospho-D-ribosyl)imidazole-4-carboxamide from 5-amino-1-(5-phospho-D-ribosyl)imidazole-4-carboxylate: step 1/2. This Desulfatibacillum aliphaticivorans protein is Phosphoribosylaminoimidazole-succinocarboxamide synthase.